We begin with the raw amino-acid sequence, 276 residues long: Mitochondrial distribution and morphology protein 12 (276 aa).

Positions 1–276 constitute an SMP-LTD domain; sequence MSIDIQWNLL…FVWPSYFTLY (276 aa). Residues 68-104 are disordered; it reads TLYSDDSSSLDDEESDREEENMTELPPYGATENGVHK. The span at 75-89 shows a compositional bias: acidic residues; sequence SSLDDEESDREEENM.

It belongs to the MDM12 family. Component of the ER-mitochondria encounter structure (ERMES) or MDM complex, composed of mmm1, mdm10, mdm12 and mdm34. A mmm1 homodimer associates with one molecule of mdm12 on each side in a pairwise head-to-tail manner, and the SMP-LTD domains of mmm1 and mdm12 generate a continuous hydrophobic tunnel for phospholipid trafficking.

It is found in the mitochondrion outer membrane. It localises to the endoplasmic reticulum membrane. Its function is as follows. Component of the ERMES/MDM complex, which serves as a molecular tether to connect the endoplasmic reticulum (ER) and mitochondria. Components of this complex are involved in the control of mitochondrial shape and protein biogenesis, and function in nonvesicular lipid trafficking between the ER and mitochondria. Mdm12 is required for the interaction of the ER-resident membrane protein mmm1 and the outer mitochondrial membrane-resident beta-barrel protein mdm10. The mdm12-mmm1 subcomplex functions in the major beta-barrel assembly pathway that is responsible for biogenesis of all mitochondrial outer membrane beta-barrel proteins, and acts in a late step after the SAM complex. The mdm10-mdm12-mmm1 subcomplex further acts in the TOM40-specific pathway after the action of the mdm12-mmm1 complex. Essential for establishing and maintaining the structure of mitochondria and maintenance of mtDNA nucleoids. This Schizosaccharomyces japonicus (strain yFS275 / FY16936) (Fission yeast) protein is Mitochondrial distribution and morphology protein 12.